Here is a 290-residue protein sequence, read N- to C-terminus: 4-hydroxy-tetrahydrodipicolinate synthase (290 aa).

Residue T44 coordinates pyruvate. Residue Y132 is the Proton donor/acceptor of the active site. Residue K160 is the Schiff-base intermediate with substrate of the active site. I202 serves as a coordination point for pyruvate.

This sequence belongs to the DapA family. As to quaternary structure, homotetramer; dimer of dimers.

It localises to the cytoplasm. It catalyses the reaction L-aspartate 4-semialdehyde + pyruvate = (2S,4S)-4-hydroxy-2,3,4,5-tetrahydrodipicolinate + H2O + H(+). It participates in amino-acid biosynthesis; L-lysine biosynthesis via DAP pathway; (S)-tetrahydrodipicolinate from L-aspartate: step 3/4. Its function is as follows. Catalyzes the condensation of (S)-aspartate-beta-semialdehyde [(S)-ASA] and pyruvate to 4-hydroxy-tetrahydrodipicolinate (HTPA). The polypeptide is 4-hydroxy-tetrahydrodipicolinate synthase (Ruegeria pomeroyi (strain ATCC 700808 / DSM 15171 / DSS-3) (Silicibacter pomeroyi)).